Consider the following 158-residue polypeptide: NAD(P)H-quinone oxidoreductase subunit N, organellar chromatophore (158 aa).

The protein belongs to the complex I NdhN subunit family. NDH-1 can be composed of about 15 different subunits; different subcomplexes with different compositions have been identified which probably have different functions.

The protein resides in the plastid. It is found in the organellar chromatophore thylakoid membrane. It carries out the reaction a plastoquinone + NADH + (n+1) H(+)(in) = a plastoquinol + NAD(+) + n H(+)(out). The catalysed reaction is a plastoquinone + NADPH + (n+1) H(+)(in) = a plastoquinol + NADP(+) + n H(+)(out). Its function is as follows. NDH-1 shuttles electrons from an unknown electron donor, via FMN and iron-sulfur (Fe-S) centers, to quinones in the respiratory and/or the photosynthetic chain. The immediate electron acceptor for the enzyme in this species is believed to be plastoquinone. Couples the redox reaction to proton translocation, and thus conserves the redox energy in a proton gradient. The polypeptide is NAD(P)H-quinone oxidoreductase subunit N, organellar chromatophore (Paulinella chromatophora).